A 543-amino-acid polypeptide reads, in one-letter code: Small conductance calcium-activated potassium channel protein 1 (543 aa).

The interval 1-92 (MNSHSYNGSV…SGKPSNVGHR (92 aa)) is disordered. The span at 65 to 76 (DQDDDEDDEEDE) shows a compositional bias: acidic residues. A helical transmembrane segment spans residues 111-131 (LIFGMFGIVVMVTETELSWGV). A helical membrane pass occupies residues 140–160 (FALKCLISLSTAILLGLVVLY). A helical membrane pass occupies residues 179 to 199 (IAMTCERVFLISLELAVCAIH). A helical membrane pass occupies residues 228 to 248 (VLLSIPMFLRLYLLGRVMLLH). Residues 277–297 (LMTICPGTVLLVFSISSWIIA) form a helical membrane-spanning segment. An intramembrane region (pore-forming) is located at residues 317–337 (FLGAMWLISITFLSIGYGDMV). Residues 346-366 (VCLLTGIMGAGCTALVVAVVA) traverse the membrane as a helical segment. A calmodulin-binding region spans residues 384-463 (DTQLTKRVKN…LTDLAKTQTV (80 aa)). Residues 505-543 (QAIRPPPPPLPPRPGPGPQDQAARSSPCRWTPVAPSDCG) are disordered. The span at 508 to 521 (RPPPPPLPPRPGPG) shows a compositional bias: pro residues.

The protein belongs to the potassium channel KCNN family. KCa2.1/KCNN1 subfamily. As to quaternary structure, homodimer. Heteromultimer with KCNN2 and KCNN3. The complex is composed of 4 channel subunits each of which binds to a calmodulin subunit which regulates the channel activity through calcium-binding. Interacts with calmodulin.

The protein localises to the membrane. It is found in the cytoplasm. It localises to the myofibril. Its subcellular location is the sarcomere. The protein resides in the z line. It catalyses the reaction K(+)(in) = K(+)(out). With respect to regulation, inhibited by bee venom neurotoxin apamin. Inhibited by d-tubocurarine and tetraethylammonium (TEA). Small conductance calcium-activated potassium channel that mediates the voltage-independent transmembrane transfer of potassium across the cell membrane through a constitutive interaction with calmodulin which binds the intracellular calcium allowing its opening. The current is characterized by a voltage-independent activation, an intracellular calcium concentration increase-dependent activation and a single-channel conductance of about 3 picosiemens. Also presents an inwardly rectifying current, thus reducing its already small outward conductance of potassium ions, which is particularly the case when the membrane potential displays positive values, above + 20 mV. Activation is followed by membrane hyperpolarization. Thought to regulate neuronal excitability by contributing to the slow component of synaptic afterhyperpolarization. The protein is Small conductance calcium-activated potassium channel protein 1 of Homo sapiens (Human).